Reading from the N-terminus, the 476-residue chain is Aspartyl/glutamyl-tRNA(Asn/Gln) amidotransferase subunit B (476 aa).

The protein belongs to the GatB/GatE family. GatB subfamily. As to quaternary structure, heterotrimer of A, B and C subunits.

The enzyme catalyses L-glutamyl-tRNA(Gln) + L-glutamine + ATP + H2O = L-glutaminyl-tRNA(Gln) + L-glutamate + ADP + phosphate + H(+). It carries out the reaction L-aspartyl-tRNA(Asn) + L-glutamine + ATP + H2O = L-asparaginyl-tRNA(Asn) + L-glutamate + ADP + phosphate + 2 H(+). Functionally, allows the formation of correctly charged Asn-tRNA(Asn) or Gln-tRNA(Gln) through the transamidation of misacylated Asp-tRNA(Asn) or Glu-tRNA(Gln) in organisms which lack either or both of asparaginyl-tRNA or glutaminyl-tRNA synthetases. The reaction takes place in the presence of glutamine and ATP through an activated phospho-Asp-tRNA(Asn) or phospho-Glu-tRNA(Gln). The polypeptide is Aspartyl/glutamyl-tRNA(Asn/Gln) amidotransferase subunit B (Lacticaseibacillus paracasei (strain ATCC 334 / BCRC 17002 / CCUG 31169 / CIP 107868 / KCTC 3260 / NRRL B-441) (Lactobacillus paracasei)).